Consider the following 141-residue polypeptide: Hemoglobin subunit alpha-1/2 (141 aa).

One can recognise a Globin domain in the interval 1-141 (VLSPADKTNV…VSTVLTSKYR (141 aa)). Ser3 is subject to Phosphoserine. Lys7 bears the N6-succinyllysine mark. Thr8 carries the phosphothreonine modification. Lys11 carries the post-translational modification N6-succinyllysine. Lys16 is modified (N6-acetyllysine; alternate). Lys16 bears the N6-succinyllysine; alternate mark. Tyr24 is modified (phosphotyrosine). Ser35 carries the post-translational modification Phosphoserine. Lys40 carries the N6-succinyllysine modification. At Ser49 the chain carries Phosphoserine. Position 58 (His58) interacts with O2. His87 serves as a coordination point for heme b. Phosphoserine is present on Ser102. Thr108 carries the phosphothreonine modification. 2 positions are modified to phosphoserine: Ser124 and Ser131. Thr134 and Thr137 each carry phosphothreonine. The residue at position 138 (Ser138) is a Phosphoserine.

Belongs to the globin family. In terms of assembly, heterotetramer of two alpha chains and two beta chains. Red blood cells.

In terms of biological role, involved in oxygen transport from the lung to the various peripheral tissues. In Macaca sinica (Toque macaque), this protein is Hemoglobin subunit alpha-1/2.